The chain runs to 384 residues: MVTYAGKLVLAPMVRAGELPTRLMALAHGADLVWSPEIIDKKLIQCVRKENTALQTVDYVVPSKVQTRPETLVFRTYPKLESSKLIFQIGSASPALATQAALKVINDVSGIDINAGCPKHFSIHSGMGSALLRTPDTLCLILKELVKNVGNPHSKPISVKIRLLDTKQDTLQLVKRLCATGITNLTVHCRKTEMRNREQPITDYIAEIYEICQANNVSLIVNGAIRDRSHFHDLQANHWKNTNIGGMIAECAERDPTVFDHTSKPSEDGPSWVVACREFIQWATKFDNHIGNTKYMLSRIVPGKSVFFQYFARCKSPEEVSFVLKQLNDDGSAQTDPSEYLENCRAQEKALKNANAIAKQKRKQTDHIGSDTKKQKVVPLPTDI.

Residues 12 to 14 (PMV) and glutamine 88 contribute to the FMN site. Cysteine 117 functions as the Proton donor in the catalytic mechanism. Residues lysine 160, histidine 188, 222–224 (NGA), and 249–250 (AE) each bind FMN. Residues 359–384 (KQKRKQTDHIGSDTKKQKVVPLPTDI) form a disordered region. Residues 363–374 (KQTDHIGSDTKK) are compositionally biased toward basic and acidic residues.

It belongs to the Dus family. Dus2 subfamily. Monomer. FMN serves as cofactor. N-glycosylated.

It localises to the cytoplasm. Its subcellular location is the nucleus. It catalyses the reaction 5,6-dihydrouridine(20) in tRNA + NADP(+) = uridine(20) in tRNA + NADPH + H(+). The catalysed reaction is 5,6-dihydrouridine(20) in tRNA + NAD(+) = uridine(20) in tRNA + NADH + H(+). The enzyme catalyses a 5,6-dihydrouridine in mRNA + NAD(+) = a uridine in mRNA + NADH + H(+). It carries out the reaction a 5,6-dihydrouridine in mRNA + NADP(+) = a uridine in mRNA + NADPH + H(+). Catalyzes the NADPH-dependent synthesis of dihydrouridine, a modified base found in the D-loop of most tRNAs. Specifically modifies U20 in cytoplasmic tRNAs. Also able to mediate dihydrouridylation of some mRNAs, thereby affecting their translation. The polypeptide is tRNA-dihydrouridine(20) synthase [NAD(P)+] (SMM1) (Saccharomyces cerevisiae (strain ATCC 204508 / S288c) (Baker's yeast)).